A 193-amino-acid polypeptide reads, in one-letter code: MRLCDKDIEEWLERKELIIEPYPNKTLINGITVDIHLGNKFRFFYEHTGSCIDLSNSKIIGGLSLTEIMSNEIIFSKEQPCFLQPGSLVLCSTFESIKMPNNLVGWLDGRSSLARLGLMIHATAHRIDPGWNGNIVLEMFNAGKLTLVLRPKMRIAALSFEVLSQPVLRPYNLRKEAKYKIQNGVVPSRIHKE.

Residues 110–115 (RSSLAR), Asp128, 136–138 (VLE), Tyr171, Lys178, and Gln182 contribute to the dCTP site. The active-site Proton donor/acceptor is Glu138.

It belongs to the dCTP deaminase family. In terms of assembly, homotrimer.

The enzyme catalyses dCTP + H2O + H(+) = dUTP + NH4(+). It participates in pyrimidine metabolism; dUMP biosynthesis; dUMP from dCTP (dUTP route): step 1/2. Its function is as follows. Catalyzes the deamination of dCTP to dUTP. This Buchnera aphidicola subsp. Acyrthosiphon pisum (strain APS) (Acyrthosiphon pisum symbiotic bacterium) protein is dCTP deaminase.